The following is a 657-amino-acid chain: KNR4/SMI1 homolog (657 aa).

Disordered regions lie at residues 168 to 193, 366 to 402, and 416 to 657; these read EQQQ…QKGY, SSSV…ESVS, and LTQT…TVAL. A compositionally biased stretch (polar residues) spans 174–187; the sequence is KSSSELPQTVTPQA. Residues 416–436 are compositionally biased toward polar residues; it reads LTQTDASSKGTTKPATPNPMT. 2 stretches are compositionally biased toward low complexity: residues 444–455 and 473–482; these read STPGSPSAAAEA and TPTVTKESTP. Residues 492–504 are compositionally biased toward basic and acidic residues; the sequence is LDSKNTETNEDTR. Positions 505–521 are enriched in polar residues; sequence ATNTAHSMAPTVSSAIT. Composition is skewed to basic and acidic residues over residues 535–561, 569–604, and 627–650; these read KPKD…KANE, VEPK…EKKV, and KSDK…KLNE.

This sequence belongs to the KNR4/SMI1 family.

This chain is KNR4/SMI1 homolog, found in Eremothecium gossypii (strain ATCC 10895 / CBS 109.51 / FGSC 9923 / NRRL Y-1056) (Yeast).